The chain runs to 130 residues: DNA-directed RNA polymerase subunit omega (130 aa).

Residues 110 to 130 (EELLKGLEGLAPPEEQPEEEE) are disordered.

This sequence belongs to the RNA polymerase subunit omega family. As to quaternary structure, the RNAP catalytic core consists of 2 alpha, 1 beta, 1 beta' and 1 omega subunit. When a sigma factor is associated with the core the holoenzyme is formed, which can initiate transcription.

The enzyme catalyses RNA(n) + a ribonucleoside 5'-triphosphate = RNA(n+1) + diphosphate. Its function is as follows. Promotes RNA polymerase assembly. Latches the N- and C-terminal regions of the beta' subunit thereby facilitating its interaction with the beta and alpha subunits. This is DNA-directed RNA polymerase subunit omega from Afipia carboxidovorans (strain ATCC 49405 / DSM 1227 / KCTC 32145 / OM5) (Oligotropha carboxidovorans).